Consider the following 109-residue polypeptide: Large ribosomal subunit protein uL22 (109 aa).

It belongs to the universal ribosomal protein uL22 family. Part of the 50S ribosomal subunit.

In terms of biological role, this protein binds specifically to 23S rRNA; its binding is stimulated by other ribosomal proteins, e.g. L4, L17, and L20. It is important during the early stages of 50S assembly. It makes multiple contacts with different domains of the 23S rRNA in the assembled 50S subunit and ribosome. Functionally, the globular domain of the protein is located near the polypeptide exit tunnel on the outside of the subunit, while an extended beta-hairpin is found that lines the wall of the exit tunnel in the center of the 70S ribosome. The polypeptide is Large ribosomal subunit protein uL22 (Dehalococcoides mccartyi (strain ATCC BAA-2266 / KCTC 15142 / 195) (Dehalococcoides ethenogenes (strain 195))).